Reading from the N-terminus, the 454-residue chain is Lamina-associated polypeptide 2, isoforms beta/gamma (454 aa).

Positions 1 to 410 are nucleoplasmic; it reads MPEFLEDPSV…KSEKTKKGRS (410 aa). One can recognise an LEM-like domain in the interval 5 to 48; the sequence is LEDPSVLTKDKLKSELVANNVTLPAGEQRKDVYVQLYLQHLTAR. Disordered regions lie at residues 47 to 117 and 149 to 265; these read ARNR…ELTN and LREQ…VETS. A linker region spans residues 49–108; it reads NRPPLPAGTNSKGPPDFSSDEEREPTPVLGSGAAAAGRSRAAVGRKATKKTDKPRQEDKD. Thr57 bears the Phosphothreonine mark. Ser59, Ser66, and Ser67 each carry phosphoserine. At Thr74 the chain carries Phosphothreonine. The span at 78–93 shows a compositional bias: low complexity; the sequence is GSGAAAAGRSRAAVGR. The residue at position 79 (Ser79) is a Phosphoserine. Omega-N-methylarginine is present on residues Arg86 and Arg88. Residues 97-106 show a composition bias toward basic and acidic residues; sequence KKTDKPRQED. Over residues 107 to 117 the composition is skewed to acidic residues; sequence KDDLDVTELTN. Residues 109–153 form the LEM domain; that stretch reads DLDVTELTNEDLLDQLVKYGVNPGPIVGTTRKLYEKKLLKLREQG. Residues 138 to 243 are NAKAP95-binding N; it reads TRKLYEKKLL…TSGSSKGGPL (106 aa). Thr154 is modified (phosphothreonine). The segment covering 155-178 has biased composition (polar residues); it reads ESRSSTPLPTISSSAENTRQNGSN. Residues Ser156 and Ser159 each carry the phosphoserine modification. Phosphothreonine is present on residues Thr160 and Thr164. Residues Ser166, Ser168, Ser177, Ser180, Ser184, and Ser190 each carry the phosphoserine modification. Residues 179 to 203 show a composition bias toward basic and acidic residues; sequence DSDRYSDNEEDSKIELKLEKREPLK. N6-acetyllysine is present on Lys207. Residue Thr211 is modified to Phosphothreonine. The segment covering 220-237 has biased composition (polar residues); sequence NQSYSQAGITETEWTSGS. A phosphoserine mark is found at Ser222, Ser224, Ser250, Ser254, Ser265, Ser292, and Ser306. Residues 299-371 form a binds lamins B region; sequence TGNFKHASPI…SCRRPIKGAA (73 aa). The NAKAP95-binding C stretch occupies residues 300–374; that stretch reads GNFKHASPIL…RPIKGAAGRP (75 aa). Thr312 carries the phosphothreonine modification. At Ser315 the chain carries Phosphoserine. Arg320 carries the citrulline modification. Phosphoserine is present on residues Ser362, Ser378, and Ser385. Lys389 bears the N6-acetyllysine mark. A Glycyl lysine isopeptide (Lys-Gly) (interchain with G-Cter in SUMO2) cross-link involves residue Lys401. Ser402 is subject to Phosphoserine. Residues 411–434 traverse the membrane as a helical; Signal-anchor for type II membrane protein segment; it reads IPVWIKILLFVVVAVFLFLVYQAM. The Lumenal segment spans residues 435 to 454; it reads ETNQVNPFSNFLHVDPRKSN.

Belongs to the LEM family. As to quaternary structure, interacts with LMNB1, LMNB2, BANF1, AKAP8L, GMCL and chromosomes. Isoform Zeta interacts with BANF1/BAF and may sequester it in the cytoplasm. In terms of processing, mitosis-specific phosphorylation specifically abolishes its binding to lamin B and chromosomes. Citrullinated by PADI4. In terms of tissue distribution, expressed in many tissues. Most abundant in adult thymus and fetal liver.

It localises to the nucleus inner membrane. The protein localises to the cytoplasm. Its function is as follows. May help direct the assembly of the nuclear lamina and thereby help maintain the structural organization of the nuclear envelope. Possible receptor for attachment of lamin filaments to the inner nuclear membrane. May be involved in the control of initiation of DNA replication through its interaction with NAKAP95. In terms of biological role, thymopoietin (TP) and Thymopentin (TP5) may play a role in T-cell development and function. TP5 is an immunomodulating pentapeptide. The chain is Lamina-associated polypeptide 2, isoforms beta/gamma (TMPO) from Homo sapiens (Human).